We begin with the raw amino-acid sequence, 466 residues long: Glycosyl hydrolase family 109 protein (466 aa).

The segment at residues 1 to 30 is a signal peptide (tat-type signal); that stretch reads MENTRRSFLKKVSAAGIGAAGLAMAGNAGA. Residues 59–60, aspartate 81, 130–133, 151–152, and asparagine 180 each bind NAD(+); these read SR, WEWH, and EV. A substrate-binding site is contributed by tyrosine 209. 241 to 245 contributes to the NAD(+) binding site; that stretch reads AEAQW. Residues arginine 246, 258-261, and tyrosine 340 each bind substrate; that span reads YPTH. Position 258 (tyrosine 258) interacts with NAD(+).

Belongs to the Gfo/Idh/MocA family. Glycosyl hydrolase 109 subfamily. NAD(+) serves as cofactor. Predicted to be exported by the Tat system. The position of the signal peptide cleavage has not been experimentally proven.

Its function is as follows. Glycosidase. In Parabacteroides distasonis (strain ATCC 8503 / DSM 20701 / CIP 104284 / JCM 5825 / NCTC 11152), this protein is Glycosyl hydrolase family 109 protein.